The chain runs to 261 residues: Probable septum site-determining protein MinC (261 aa).

The tract at residues 106–145 is disordered; it reads RAPAAKPADEAEPAAVPAVETAAAPAAAAAPEQPSEPAPT. A compositionally biased stretch (low complexity) spans 118–144; it reads PAAVPAVETAAAPAAAAAPEQPSEPAP.

It belongs to the MinC family. As to quaternary structure, interacts with MinD and FtsZ.

Cell division inhibitor that blocks the formation of polar Z ring septums. Rapidly oscillates between the poles of the cell to destabilize FtsZ filaments that have formed before they mature into polar Z rings. Prevents FtsZ polymerization. In Burkholderia orbicola (strain AU 1054), this protein is Probable septum site-determining protein MinC.